We begin with the raw amino-acid sequence, 238 residues long: LexA repressor (238 aa).

The H-T-H motif DNA-binding region spans 26 to 46 (FDEMKDALDLASKSGIHRLIT). Residues Ser158 and Lys196 each act as for autocatalytic cleavage activity in the active site.

It belongs to the peptidase S24 family. In terms of assembly, homodimer.

It carries out the reaction Hydrolysis of Ala-|-Gly bond in repressor LexA.. Represses a number of genes involved in the response to DNA damage (SOS response), including recA and lexA. In the presence of single-stranded DNA, RecA interacts with LexA causing an autocatalytic cleavage which disrupts the DNA-binding part of LexA, leading to derepression of the SOS regulon and eventually DNA repair. This Sinorhizobium medicae (strain WSM419) (Ensifer medicae) protein is LexA repressor.